Consider the following 402-residue polypeptide: Multidrug resistance protein MdtH (402 aa).

Over 1–12 (MSRVSQARNLGK) the chain is Cytoplasmic. A helical transmembrane segment spans residues 13 to 33 (YFLLIDNMLVVLGFFVVFPLI). Residues 34–98 (SIRFVDQMGW…GFATMGIAHE (65 aa)) are Periplasmic-facing. Residues 99–116 (PWLLWFSCLLSGLGGTLF) form a helical membrane-spanning segment. Residues 117–138 (DPPRSALVVKLIRPQQRGRFFS) lie on the Cytoplasmic side of the membrane. The chain crosses the membrane as a helical span at residues 139-159 (LLMMQDSASAVIGALLGSWLL). The Periplasmic portion of the chain corresponds to 160–164 (QYDFR). Residues 165 to 185 (LVCATGAVLFVLCAAFNAWLL) form a helical membrane-spanning segment. Topologically, residues 186-213 (PAWKLSTVRTPVREGMTRVMRDKRFVTY) are cytoplasmic. Residues 214–234 (VLTLAGYYMLAVQVMLMLPIM) traverse the membrane as a helical segment. The Periplasmic portion of the chain corresponds to 235 to 243 (VNDVAGAPS). The chain crosses the membrane as a helical span at residues 244-264 (AVKWMYAIEACLSLTLLYPIA). Over 265-276 (RWSEKHFRLEHR) the chain is Cytoplasmic. The helical transmembrane segment at 277–297 (LMAGLLIMSLSMMPVGMVSGL) threads the bilayer. At 298 to 299 (QQ) the chain is on the periplasmic side. A helical membrane pass occupies residues 300 to 320 (LFTLICLFYIGSIIAEPARET). At 321 to 339 (LSASLADARARGSYMGFSR) the chain is on the cytoplasmic side. A helical membrane pass occupies residues 340–360 (LGLAIGGAIGYIGGGWLFDLG). Topologically, residues 361–367 (KSAHQPE) are periplasmic. A helical membrane pass occupies residues 368-388 (LPWMMLGIIGIFTFLALGWQF). Residues 389 to 402 (SQKRAARRLLERDA) lie on the Cytoplasmic side of the membrane.

This sequence belongs to the major facilitator superfamily. DHA1 family. MdtH (TC 2.A.1.2.21) subfamily.

The protein resides in the cell inner membrane. This is Multidrug resistance protein MdtH from Shigella flexneri.